The chain runs to 154 residues: Cytochrome c-type biogenesis protein CcmE (154 aa).

Over 1-8 (MHPQRKQR) the chain is Cytoplasmic. Residues 9–29 (LMIVLFIVVFSSLAVGLIAYA) form a helical; Signal-anchor for type II membrane protein membrane-spanning segment. At 30 to 154 (LRENINLFYP…ATCGGLNYGA (125 aa)) the chain is on the periplasmic side. Heme is bound by residues His124 and Tyr128.

The protein belongs to the CcmE/CycJ family.

It is found in the cell inner membrane. In terms of biological role, heme chaperone required for the biogenesis of c-type cytochromes. Transiently binds heme delivered by CcmC and transfers the heme to apo-cytochromes in a process facilitated by CcmF and CcmH. This Cellvibrio japonicus (strain Ueda107) (Pseudomonas fluorescens subsp. cellulosa) protein is Cytochrome c-type biogenesis protein CcmE.